A 446-amino-acid polypeptide reads, in one-letter code: Nuclear envelope integral membrane protein 1 (446 aa).

A signal peptide spans 1 to 37 (MAGFMKYKSVSTTIETVRLKLILTAVLFLFPFSQTSG). Residues asparagine 62, asparagine 118, and asparagine 129 are each glycosylated (N-linked (GlcNAc...) asparagine). The next 5 helical transmembrane spans lie at 154–174 (IYLFLVFLAGVLLFFYADVLS), 181–201 (YSAGMSTGMIASLLILIFIVY), 209–229 (PFYMLVVGGWSFSLYIIQLVF), 239–259 (HWHLAIGYVFVVGFISFAVCY), and 269–289 (SINILSWALQIFGLLLVYAGI). Acidic residues predominate over residues 410 to 431 (LFSTDEEDKEEEEDGWETEDDI). Residues 410-446 (LFSTDEEDKEEEEDGWETEDDIKPEVTSPRMNNTRGK) form a disordered region. Asparagine 441 is a glycosylation site (N-linked (GlcNAc...) asparagine).

The protein belongs to the NEMP family.

The protein localises to the nucleus inner membrane. Its function is as follows. Contributes to nuclear envelope stiffness in germ cells. Involved in male and female fertility. Essential for normal erythropoiesis. Required for efficient nuclear envelope opening and enucleation during the late stages of erythroblast maturation. This chain is Nuclear envelope integral membrane protein 1, found in Danio rerio (Zebrafish).